The chain runs to 227 residues: DNA repair protein RecO (227 aa).

The protein belongs to the RecO family.

Involved in DNA repair and RecF pathway recombination. This Pseudomonas putida (strain ATCC 700007 / DSM 6899 / JCM 31910 / BCRC 17059 / LMG 24140 / F1) protein is DNA repair protein RecO.